A 212-amino-acid chain; its full sequence is Pyridoxine/pyridoxamine 5'-phosphate oxidase (212 aa).

FMN-binding positions include 57 to 62 (RMVLLK), 72 to 73 (YT), R78, K79, and Q101. Residue K62 coordinates substrate. Positions 119, 123, and 127 each coordinate substrate. FMN-binding positions include 136 to 137 (QS) and W181. 187–189 (RLH) is a binding site for substrate. An FMN-binding site is contributed by R191.

This sequence belongs to the pyridoxamine 5'-phosphate oxidase family. In terms of assembly, homodimer. FMN serves as cofactor.

The enzyme catalyses pyridoxamine 5'-phosphate + O2 + H2O = pyridoxal 5'-phosphate + H2O2 + NH4(+). It carries out the reaction pyridoxine 5'-phosphate + O2 = pyridoxal 5'-phosphate + H2O2. It functions in the pathway cofactor metabolism; pyridoxal 5'-phosphate salvage; pyridoxal 5'-phosphate from pyridoxamine 5'-phosphate: step 1/1. The protein operates within cofactor metabolism; pyridoxal 5'-phosphate salvage; pyridoxal 5'-phosphate from pyridoxine 5'-phosphate: step 1/1. Catalyzes the oxidation of either pyridoxine 5'-phosphate (PNP) or pyridoxamine 5'-phosphate (PMP) into pyridoxal 5'-phosphate (PLP). The chain is Pyridoxine/pyridoxamine 5'-phosphate oxidase from Erythrobacter litoralis (strain HTCC2594).